A 243-amino-acid chain; its full sequence is Anti-H(O) lectin 1 (243 aa).

Residue Asn-10 is glycosylated (N-linked (GlcNAc...) asparagine; partial). Asn-116 carries an N-linked (GlcNAc...) asparagine glycan. Mn(2+) is bound by residues Glu-126 and Asp-128. Ca(2+) is bound by residues Asp-128, Asn-135, and Asp-138. Residues Asp-138 and His-143 each contribute to the Mn(2+) site.

This sequence belongs to the leguminous lectin family.

Its function is as follows. L-fucose specific lectin. In Ulex europaeus (Furze), this protein is Anti-H(O) lectin 1.